The following is a 116-amino-acid chain: Integration host factor subunit alpha (116 aa).

Disordered stretches follow at residues 58–80 and 94–116; these read FGNF…GETI and QKLK…EAAE. Positions 94-105 are enriched in polar residues; the sequence is QKLKSTVEQSGN.

Belongs to the bacterial histone-like protein family. Heterodimer of an alpha and a beta chain.

In terms of biological role, this protein is one of the two subunits of integration host factor, a specific DNA-binding protein that functions in genetic recombination as well as in transcriptional and translational control. The polypeptide is Integration host factor subunit alpha (Bordetella avium (strain 197N)).